The following is a 177-amino-acid chain: ATP synthase subunit delta (177 aa).

Belongs to the ATPase delta chain family. As to quaternary structure, F-type ATPases have 2 components, F(1) - the catalytic core - and F(0) - the membrane proton channel. F(1) has five subunits: alpha(3), beta(3), gamma(1), delta(1), epsilon(1). F(0) has three main subunits: a(1), b(2) and c(10-14). The alpha and beta chains form an alternating ring which encloses part of the gamma chain. F(1) is attached to F(0) by a central stalk formed by the gamma and epsilon chains, while a peripheral stalk is formed by the delta and b chains.

The protein resides in the cell inner membrane. In terms of biological role, f(1)F(0) ATP synthase produces ATP from ADP in the presence of a proton or sodium gradient. F-type ATPases consist of two structural domains, F(1) containing the extramembraneous catalytic core and F(0) containing the membrane proton channel, linked together by a central stalk and a peripheral stalk. During catalysis, ATP synthesis in the catalytic domain of F(1) is coupled via a rotary mechanism of the central stalk subunits to proton translocation. Functionally, this protein is part of the stalk that links CF(0) to CF(1). It either transmits conformational changes from CF(0) to CF(1) or is implicated in proton conduction. In Erwinia tasmaniensis (strain DSM 17950 / CFBP 7177 / CIP 109463 / NCPPB 4357 / Et1/99), this protein is ATP synthase subunit delta.